A 295-amino-acid polypeptide reads, in one-letter code: 33 kDa chaperonin (295 aa).

2 cysteine pairs are disulfide-bonded: C238-C240 and C271-C274.

Belongs to the HSP33 family. Post-translationally, under oxidizing conditions two disulfide bonds are formed involving the reactive cysteines. Under reducing conditions zinc is bound to the reactive cysteines and the protein is inactive.

It is found in the cytoplasm. Redox regulated molecular chaperone. Protects both thermally unfolding and oxidatively damaged proteins from irreversible aggregation. Plays an important role in the bacterial defense system toward oxidative stress. The sequence is that of 33 kDa chaperonin from Clostridium botulinum (strain Alaska E43 / Type E3).